The sequence spans 210 residues: Na(+)-translocating NADH-quinone reductase subunit D (210 aa).

Helical transmembrane passes span 11-31 (ILAP…VCSA), 42-62 (FVMT…VSLI), 70-90 (VRII…DQIL), 103-123 (VFVG…AFAM), 131-151 (FIDG…VGFF), and 178-198 (NGLM…IWAI).

It belongs to the NqrDE/RnfAE family. In terms of assembly, composed of six subunits; NqrA, NqrB, NqrC, NqrD, NqrE and NqrF.

The protein resides in the cell inner membrane. It catalyses the reaction a ubiquinone + n Na(+)(in) + NADH + H(+) = a ubiquinol + n Na(+)(out) + NAD(+). NQR complex catalyzes the reduction of ubiquinone-1 to ubiquinol by two successive reactions, coupled with the transport of Na(+) ions from the cytoplasm to the periplasm. NqrA to NqrE are probably involved in the second step, the conversion of ubisemiquinone to ubiquinol. The chain is Na(+)-translocating NADH-quinone reductase subunit D from Vibrio anguillarum (Listonella anguillarum).